The sequence spans 262 residues: tRNA pseudouridine synthase A (262 aa).

Aspartate 51 (nucleophile) is an active-site residue. Substrate is bound at residue tyrosine 109.

It belongs to the tRNA pseudouridine synthase TruA family. In terms of assembly, homodimer.

The enzyme catalyses uridine(38/39/40) in tRNA = pseudouridine(38/39/40) in tRNA. Formation of pseudouridine at positions 38, 39 and 40 in the anticodon stem and loop of transfer RNAs. In Aliivibrio fischeri (strain ATCC 700601 / ES114) (Vibrio fischeri), this protein is tRNA pseudouridine synthase A.